A 259-amino-acid chain; its full sequence is MAKINVYSLKGDITEEIELPEIFEEEYRPDVIKRAVISMQTARIQPWGTDPMAGKRTTAESFGSGRGAAMVPRVKGSSKAAFVPQAIGGRKAHPPRVNTIYHEKINKKERTLAIRSAIAATANKELVEQRGHQVSELEQIPFVIDDEIETVKTTKETREIFKDLGIMDDIVRAKKGRKIKSGKGKLRGRKYRTPKGPLVVVGNDRGISLGARNHAGVDVVEVNNINAELLAPGTHAGRLTIYTKSAIEKLGDLFQKNRS.

Residues 47–67 (WGTDPMAGKRTTAESFGSGRG) are disordered.

It belongs to the universal ribosomal protein uL4 family. Part of the 50S ribosomal subunit.

In terms of biological role, one of the primary rRNA binding proteins, this protein initially binds near the 5'-end of the 23S rRNA. It is important during the early stages of 50S assembly. It makes multiple contacts with different domains of the 23S rRNA in the assembled 50S subunit and ribosome. Functionally, forms part of the polypeptide exit tunnel. This chain is Large ribosomal subunit protein uL4, found in Methanosphaera stadtmanae (strain ATCC 43021 / DSM 3091 / JCM 11832 / MCB-3).